We begin with the raw amino-acid sequence, 310 residues long: Carbamate kinase (310 aa).

Belongs to the carbamate kinase family. In terms of assembly, homodimer.

The protein localises to the cytoplasm. The catalysed reaction is hydrogencarbonate + NH4(+) + ATP = carbamoyl phosphate + ADP + H2O + H(+). It functions in the pathway amino-acid degradation; L-arginine degradation via ADI pathway. The polypeptide is Carbamate kinase (Haemophilus influenzae (strain ATCC 51907 / DSM 11121 / KW20 / Rd)).